Reading from the N-terminus, the 41-residue chain is Cytochrome b559 subunit beta (41 aa).

The chain crosses the membrane as a helical span at residues 16–32; the sequence is WLAVHALAVPTVFFLGS. Histidine 20 contributes to the heme binding site.

It belongs to the PsbE/PsbF family. In terms of assembly, heterodimer of an alpha subunit and a beta subunit. PSII is composed of 1 copy each of membrane proteins PsbA, PsbB, PsbC, PsbD, PsbE, PsbF, PsbH, PsbI, PsbJ, PsbK, PsbL, PsbM, PsbT, PsbX, PsbY, PsbZ, Psb30/Ycf12, at least 3 peripheral proteins of the oxygen-evolving complex and a large number of cofactors. It forms dimeric complexes. Heme b serves as cofactor.

The protein localises to the plastid. It localises to the chloroplast thylakoid membrane. Functionally, this b-type cytochrome is tightly associated with the reaction center of photosystem II (PSII). PSII is a light-driven water:plastoquinone oxidoreductase that uses light energy to abstract electrons from H(2)O, generating O(2) and a proton gradient subsequently used for ATP formation. It consists of a core antenna complex that captures photons, and an electron transfer chain that converts photonic excitation into a charge separation. In Nephroselmis olivacea (Green alga), this protein is Cytochrome b559 subunit beta.